The following is a 240-amino-acid chain: Uridylate kinase (240 aa).

ATP is bound at residue 13–16 (KASG). The involved in allosteric activation by GTP stretch occupies residues 21–26 (GSQGFG). Position 55 (Gly-55) interacts with UMP. Positions 56 and 60 each coordinate ATP. UMP-binding positions include Asp-75 and 136 to 143 (TGNPFFTT). Residues Thr-163, Gln-164, Tyr-169, and Asp-172 each coordinate ATP.

The protein belongs to the UMP kinase family. In terms of assembly, homohexamer.

It localises to the cytoplasm. It carries out the reaction UMP + ATP = UDP + ADP. The protein operates within pyrimidine metabolism; CTP biosynthesis via de novo pathway; UDP from UMP (UMPK route): step 1/1. Allosterically activated by GTP. Inhibited by UTP. Its function is as follows. Catalyzes the reversible phosphorylation of UMP to UDP. This chain is Uridylate kinase, found in Rhizobium meliloti (strain 1021) (Ensifer meliloti).